The following is a 52-amino-acid chain: Large ribosomal subunit protein bL33 (52 aa).

It belongs to the bacterial ribosomal protein bL33 family.

This Chlamydia trachomatis serovar L2 (strain ATCC VR-902B / DSM 19102 / 434/Bu) protein is Large ribosomal subunit protein bL33.